The primary structure comprises 450 residues: Deoxyguanosinetriphosphate triphosphohydrolase-like protein (450 aa).

Positions 61-274 (RLTHSLEVAQ…MELADDIAYA (214 aa)) constitute an HD domain.

It belongs to the dGTPase family. Type 2 subfamily.

The chain is Deoxyguanosinetriphosphate triphosphohydrolase-like protein from Histophilus somni (strain 2336) (Haemophilus somnus).